A 288-amino-acid polypeptide reads, in one-letter code: Protease HtpX (288 aa).

Transmembrane regions (helical) follow at residues 5-25 (IALF…VMSL) and 34-54 (SGLL…SLLL). Residue histidine 140 coordinates Zn(2+). Residue glutamate 141 is part of the active site. Residue histidine 144 coordinates Zn(2+). 2 helical membrane-spanning segments follow: residues 155–175 (LLQG…GGII) and 190–210 (FAYF…ATMI). Residue glutamate 219 coordinates Zn(2+).

This sequence belongs to the peptidase M48B family. It depends on Zn(2+) as a cofactor.

Its subcellular location is the cell inner membrane. In Stenotrophomonas maltophilia (strain R551-3), this protein is Protease HtpX.